The following is a 251-amino-acid chain: Hydroxyacylglutathione hydrolase (251 aa).

His59, His61, Asp63, His64, His118, Asp141, and His179 together coordinate Zn(2+).

This sequence belongs to the metallo-beta-lactamase superfamily. Glyoxalase II family. As to quaternary structure, monomer. Zn(2+) serves as cofactor.

The catalysed reaction is an S-(2-hydroxyacyl)glutathione + H2O = a 2-hydroxy carboxylate + glutathione + H(+). It functions in the pathway secondary metabolite metabolism; methylglyoxal degradation; (R)-lactate from methylglyoxal: step 2/2. In terms of biological role, thiolesterase that catalyzes the hydrolysis of S-D-lactoyl-glutathione to form glutathione and D-lactic acid. The polypeptide is Hydroxyacylglutathione hydrolase (Prochlorococcus marinus (strain NATL2A)).